A 103-amino-acid chain; its full sequence is Small ribosomal subunit protein uS10 (103 aa).

This sequence belongs to the universal ribosomal protein uS10 family. Part of the 30S ribosomal subunit.

Its function is as follows. Involved in the binding of tRNA to the ribosomes. This chain is Small ribosomal subunit protein uS10, found in Alcanivorax borkumensis (strain ATCC 700651 / DSM 11573 / NCIMB 13689 / SK2).